The chain runs to 211 residues: MARYIGPLEKLSRREGINLYLKGKRSYTEKSALRKRNYVPGQHGRQKQKLTQYAMQLRSKQALKRMYGLMERQFRNTFEEAERSRSGETGEVLMQLLERRLDSVVYQMGFAPNRRTARQIVTHGHILVNGKKVNIPSYRVKVGDVIEVKEKSRNIQQVREGLELVQEGYRNIPNWLNVEIENFRGTFQRLPKIDEMDVPVPLTNIIELYSK.

Residues 99-160 form the S4 RNA-binding domain; the sequence is RRLDSVVYQM…KSRNIQQVRE (62 aa).

The protein belongs to the universal ribosomal protein uS4 family. In terms of assembly, part of the 30S ribosomal subunit. Contacts protein S5. The interaction surface between S4 and S5 is involved in control of translational fidelity.

In terms of biological role, one of the primary rRNA binding proteins, it binds directly to 16S rRNA where it nucleates assembly of the body of the 30S subunit. Functionally, with S5 and S12 plays an important role in translational accuracy. The protein is Small ribosomal subunit protein uS4 of Petrotoga mobilis (strain DSM 10674 / SJ95).